The chain runs to 325 residues: ATP synthase gamma chain (325 aa).

It belongs to the ATPase gamma chain family. As to quaternary structure, F-type ATPases have 2 components, CF(1) - the catalytic core - and CF(0) - the membrane proton channel. CF(1) has five subunits: alpha(3), beta(3), gamma(1), delta(1), epsilon(1). CF(0) has three main subunits: a, b and c.

The protein localises to the cell membrane. Its function is as follows. Produces ATP from ADP in the presence of a proton gradient across the membrane. The gamma chain is believed to be important in regulating ATPase activity and the flow of protons through the CF(0) complex. The protein is ATP synthase gamma chain of Corynebacterium glutamicum (strain ATCC 13032 / DSM 20300 / JCM 1318 / BCRC 11384 / CCUG 27702 / LMG 3730 / NBRC 12168 / NCIMB 10025 / NRRL B-2784 / 534).